The sequence spans 199 residues: MASPKGFFNYLTYFLAAGAVTLGIGFFALASALWFLICKRREIFQNSKFKAIDERCRQRPSMAKIKSHSQCVFISRNFHTGRFQLQEEQRKKEAAHIKAIKDHSKDEPQLATKNIICDPSETSSTTNRSSVTLSLSTLPSDSYYSQSIEAADDWFSDDSLVKRNSPMPSLGEPLMEKVFSYLSTISLEEGTESVLNDTL.

Residues A17 to I37 form a helical membrane-spanning segment.

The protein localises to the membrane. This is an uncharacterized protein from Homo sapiens (Human).